A 350-amino-acid polypeptide reads, in one-letter code: Dihydroorotase (350 aa).

Residues histidine 17 and histidine 19 each contribute to the Zn(2+) site. Residues 19 to 21 (HLR) and asparagine 45 each bind substrate. 3 residues coordinate Zn(2+): lysine 103, histidine 140, and histidine 178. Lysine 103 bears the N6-carboxylysine mark. Histidine 140 provides a ligand contact to substrate. Leucine 224 contacts substrate. Zn(2+) is bound at residue aspartate 252. Aspartate 252 is a catalytic residue. The substrate site is built by histidine 256 and alanine 268.

It belongs to the metallo-dependent hydrolases superfamily. DHOase family. Class II DHOase subfamily. As to quaternary structure, homodimer. The cofactor is Zn(2+).

The catalysed reaction is (S)-dihydroorotate + H2O = N-carbamoyl-L-aspartate + H(+). Its pathway is pyrimidine metabolism; UMP biosynthesis via de novo pathway; (S)-dihydroorotate from bicarbonate: step 3/3. Functionally, catalyzes the reversible cyclization of carbamoyl aspartate to dihydroorotate. The protein is Dihydroorotase of Buchnera aphidicola subsp. Acyrthosiphon pisum (strain APS) (Acyrthosiphon pisum symbiotic bacterium).